The following is a 397-amino-acid chain: Phosphoglycerate kinase (397 aa).

Residues 21 to 23 (DFN), Arg-37, 60 to 63 (HLGR), Arg-119, and Arg-152 contribute to the substrate site. ATP-binding positions include Lys-203, Gly-294, Glu-325, and 354 to 357 (GGDS).

Belongs to the phosphoglycerate kinase family. In terms of assembly, monomer.

The protein resides in the cytoplasm. It catalyses the reaction (2R)-3-phosphoglycerate + ATP = (2R)-3-phospho-glyceroyl phosphate + ADP. It functions in the pathway carbohydrate degradation; glycolysis; pyruvate from D-glyceraldehyde 3-phosphate: step 2/5. The chain is Phosphoglycerate kinase from Chlorobaculum tepidum (strain ATCC 49652 / DSM 12025 / NBRC 103806 / TLS) (Chlorobium tepidum).